Reading from the N-terminus, the 514-residue chain is RNA polymerase sigma factor SigA (514 aa).

A compositionally biased stretch (basic residues) spans 135–159; sequence AAKKATAKKAAAKKTTAKKTAAKKS. The tract at residues 135–205 is disordered; sequence AAKKATAKKA…SDDDEDDAPA (71 aa). Residues 281-351 are sigma-70 factor domain-2; that stretch reads LLEANLRLVV…TRAMADQART (71 aa). The Interaction with polymerase core subunit RpoC signature appears at 305 to 308; that stretch reads DLIQ. A sigma-70 factor domain-3 region spans residues 360-436; it reads EVINKLARVQ…DSEAVVPADA (77 aa). Residues 449–502 are sigma-70 factor domain-4; sequence VLDTLSEREAGVVSMRFGLTDGQPKTLDEIGKVYGVTRERIRQIESKTMSKLRH. The H-T-H motif DNA-binding region spans 475–494; it reads LDEIGKVYGVTRERIRQIES.

The protein belongs to the sigma-70 factor family. RpoD/SigA subfamily. Interacts transiently with the RNA polymerase catalytic core.

Its subcellular location is the cytoplasm. In terms of biological role, sigma factors are initiation factors that promote the attachment of RNA polymerase to specific initiation sites and are then released. This sigma factor is the primary sigma factor during exponential growth. The sequence is that of RNA polymerase sigma factor SigA from Streptomyces griseus.